The following is a 719-amino-acid chain: Polyribonucleotide nucleotidyltransferase (719 aa).

Aspartate 507 and aspartate 513 together coordinate Mg(2+). The 61-residue stretch at 573–633 (PKLELFSVDP…EQIKAAKDYI (61 aa)) folds into the KH domain. Positions 658–719 (GQEFQGIVKK…NGKISVDLCE (62 aa)) constitute an S1 motif domain.

The protein belongs to the polyribonucleotide nucleotidyltransferase family. Requires Mg(2+) as cofactor.

Its subcellular location is the cytoplasm. The enzyme catalyses RNA(n+1) + phosphate = RNA(n) + a ribonucleoside 5'-diphosphate. Its function is as follows. Involved in mRNA degradation. Catalyzes the phosphorolysis of single-stranded polyribonucleotides processively in the 3'- to 5'-direction. The chain is Polyribonucleotide nucleotidyltransferase from Campylobacter jejuni (strain RM1221).